Here is a 282-residue protein sequence, read N- to C-terminus: Large ribosomal subunit protein uL2 (282 aa).

A disordered region spans residues 215–282; the sequence is RHKGIRPTVR…IIRSRKETKK (68 aa). Residues 263 to 282 are compositionally biased toward basic residues; the sequence is RNPKKPSTKLIIRSRKETKK.

It belongs to the universal ribosomal protein uL2 family. Part of the 50S ribosomal subunit. Forms a bridge to the 30S subunit in the 70S ribosome.

Its function is as follows. One of the primary rRNA binding proteins. Required for association of the 30S and 50S subunits to form the 70S ribosome, for tRNA binding and peptide bond formation. It has been suggested to have peptidyltransferase activity; this is somewhat controversial. Makes several contacts with the 16S rRNA in the 70S ribosome. This Mesomycoplasma hyopneumoniae (strain 7448) (Mycoplasma hyopneumoniae) protein is Large ribosomal subunit protein uL2.